We begin with the raw amino-acid sequence, 344 residues long: Aspartate carbamoyltransferase catalytic subunit (344 aa).

The interval 1–30 (MPESPPLPKRSPLMTSSTTRPASDYPPGGD) is disordered. 2 residues coordinate carbamoyl phosphate: Arg88 and Thr89. Residue Lys116 participates in L-aspartate binding. Residues Arg138, His166, and Gln169 each coordinate carbamoyl phosphate. Arg199 and Arg253 together coordinate L-aspartate. 2 residues coordinate carbamoyl phosphate: Gly294 and Pro295.

Belongs to the aspartate/ornithine carbamoyltransferase superfamily. ATCase family. In terms of assembly, heterododecamer (2C3:3R2) of six catalytic PyrB chains organized as two trimers (C3), and six regulatory PyrI chains organized as three dimers (R2).

The enzyme catalyses carbamoyl phosphate + L-aspartate = N-carbamoyl-L-aspartate + phosphate + H(+). The protein operates within pyrimidine metabolism; UMP biosynthesis via de novo pathway; (S)-dihydroorotate from bicarbonate: step 2/3. Its function is as follows. Catalyzes the condensation of carbamoyl phosphate and aspartate to form carbamoyl aspartate and inorganic phosphate, the committed step in the de novo pyrimidine nucleotide biosynthesis pathway. The protein is Aspartate carbamoyltransferase catalytic subunit of Sphingopyxis alaskensis (strain DSM 13593 / LMG 18877 / RB2256) (Sphingomonas alaskensis).